The chain runs to 247 residues: Adenosylcobinamide-GDP ribazoletransferase (247 aa).

The next 5 helical transmembrane spans lie at 34 to 54 (IVMFPFIGLILGGVSGLIFIL), 59 to 79 (CGIPLAALFCILALALLTGGF), 113 to 133 (GGLALIFVLLTKILVVSELAL), 138 to 158 (MLAALAAACAAGRGSAVLLMY), and 187 to 207 (LAVIVATVLLPGMQGLAAMVV).

The protein belongs to the CobS family. It depends on Mg(2+) as a cofactor.

Its subcellular location is the cell inner membrane. The catalysed reaction is alpha-ribazole + adenosylcob(III)inamide-GDP = adenosylcob(III)alamin + GMP + H(+). It carries out the reaction alpha-ribazole 5'-phosphate + adenosylcob(III)inamide-GDP = adenosylcob(III)alamin 5'-phosphate + GMP + H(+). It participates in cofactor biosynthesis; adenosylcobalamin biosynthesis; adenosylcobalamin from cob(II)yrinate a,c-diamide: step 7/7. Functionally, joins adenosylcobinamide-GDP and alpha-ribazole to generate adenosylcobalamin (Ado-cobalamin). Also synthesizes adenosylcobalamin 5'-phosphate from adenosylcobinamide-GDP and alpha-ribazole 5'-phosphate. This chain is Adenosylcobinamide-GDP ribazoletransferase, found in Salmonella choleraesuis (strain SC-B67).